A 294-amino-acid chain; its full sequence is MLMNIGKVDNIKIYTLAEDYAGYNSPFWSQHGLSFLIEVESNGIKKRILFDTATYAEPILFNMKLLNINPKSIDMIILSHNHFDHTGGLFGIMKEINKEIPIFAHPNIFKVSFATEPEFMLAGTLNKTLKEDIEKLGGRWVLSRDPIRLMPGIFTLGEIEDEEKINFEKKPTIGLYKLENGRVVLDNVEDEIGLAIVTEKGLIIVSGCSHPGIVSMVKKSIKISGINKVYAVIGGFHLIDADNERIVSTIKALKKLGVKKICTGHCTGFKAENMFMEEFKEDFERLHAGKIIKF.

The substrate site is built by glutamate 116, aspartate 186, lysine 228, and histidine 265.

Belongs to the metallo-beta-lactamase superfamily. It depends on Mg(2+) as a cofactor.

It carries out the reaction 4-(beta-D-ribofuranosyl)aminobenzene 5'-phosphate + (7,8-dihydropterin-6-yl)methyl diphosphate = N-[(7,8-dihydropterin-6-yl)methyl]-4-(beta-D-ribofuranosyl)aniline 5'-phosphate + diphosphate. The protein operates within cofactor biosynthesis; 5,6,7,8-tetrahydromethanopterin biosynthesis. In terms of biological role, catalyzes the condensation of 6-hydroxymethyl-7,8-dihydropterin pyrophosphate (DHPP) with 4-(beta-D-ribofuranosyl)-aminobenzene-5'-phosphate (beta-RFA-P) to form 7,8-dihydropterin-6-methyl-4-(beta-D-ribofuranosyl)-aminobenzene-5'-phosphate, a precursor in the biosynthesis of 5,6,7,8-tetrahydromethanopterin (H4MPT). To a lesser extent, is able to condense beta-RFA-P with another arylamine, 1-(4-aminophenyl)-1-deoxy-D-ribitol (APDR), to form 7,8-dihydropterin-6-methyl-1-(4-aminophenyl)-1-deoxy-D-ribitol. Dephosphorylated beta-RFA-P is not a substrate. This chain is 7,8-dihydropterin-6-methyl-4-(beta-D-ribofuranosyl)-aminobenzene-5'-phosphate synthase, found in Methanocaldococcus jannaschii (strain ATCC 43067 / DSM 2661 / JAL-1 / JCM 10045 / NBRC 100440) (Methanococcus jannaschii).